The chain runs to 500 residues: 7-alpha-hydroxycholest-4-en-3-one 12-alpha-hydroxylase (500 aa).

Residues 2-21 form a helical membrane-spanning segment; sequence VLWGLLGALLMVMVGWLCLP. At S325 the chain carries Phosphoserine. Position 439 (C439) interacts with heme.

This sequence belongs to the cytochrome P450 family. Requires heme as cofactor. Liver (at protein level).

Its subcellular location is the endoplasmic reticulum membrane. The protein localises to the microsome membrane. It catalyses the reaction 7alpha-hydroxycholest-4-en-3-one + reduced [NADPH--hemoprotein reductase] + O2 = 7alpha,12alpha-dihydroxycholest-4-en-3-one + oxidized [NADPH--hemoprotein reductase] + H2O + H(+). The catalysed reaction is 5beta-cholestane-3alpha,7alpha-diol + reduced [NADPH--hemoprotein reductase] + O2 = 5beta-cholestane-3alpha,7alpha,12alpha-triol + oxidized [NADPH--hemoprotein reductase] + H2O + H(+). It carries out the reaction chenodeoxycholate + reduced [NADPH--hemoprotein reductase] + O2 = cholate + oxidized [NADPH--hemoprotein reductase] + H2O + H(+). Its pathway is lipid metabolism; bile acid biosynthesis. With respect to regulation, up-regulated upon treatment with streptozotocin. Its function is as follows. A cytochrome P450 monooxygenase involved in primary bile acid biosynthesis. Catalyzes the 12alpha-hydroxylation of 7alpha-hydroxy-4-cholesten-3-one, an intermediate metabolite in cholic acid biosynthesis. Controls biliary balance of cholic acid and chenodeoxycholic acid, ultimately regulating the intestinal absorption of dietary lipids. Mechanistically, uses molecular oxygen inserting one oxygen atom into a substrate, and reducing the second into a water molecule, with two electrons provided by NADPH via cytochrome P450 reductase (CPR; NADPH--hemoprotein reductase). This Oryctolagus cuniculus (Rabbit) protein is 7-alpha-hydroxycholest-4-en-3-one 12-alpha-hydroxylase (CYP8B1).